We begin with the raw amino-acid sequence, 314 residues long: Nitrilase 2 (314 aa).

One can recognise a CN hydrolase domain in the interval 7 to 269 (VTLGVAQAAP…ETLITARVST (263 aa)). Glutamate 47 functions as the Proton acceptor in the catalytic mechanism. The active-site Proton donor is the lysine 132. Residue cysteine 166 is the Nucleophile of the active site.

This sequence belongs to the carbon-nitrogen hydrolase superfamily. Nitrilase family.

The catalysed reaction is a nitrile + 2 H2O = a carboxylate + NH4(+). Functionally, nitrilases catalyze the mild hydrolytic conversion of organonitriles directly to the corresponding carboxylic acids. Catalyzes the production of aryllactic acid derivatives. Mediates the hydrolysis of cyanohydrin to (S)-phenyllactic acid. This Unknown prokaryotic organism protein is Nitrilase 2.